A 689-amino-acid chain; its full sequence is Quinidine resistance protein 3 (689 aa).

Residues 1-24 (MQAQGSQSNVGSLRSNCSDNSLPN) show a composition bias toward polar residues. Residues 1–73 (MQAQGSQSNV…DNQLSRLKSE (73 aa)) are disordered. At 1-108 (MQAQGSQSNV…RDYPPMMKKM (108 aa)) the chain is on the extracellular side. Composition is skewed to basic and acidic residues over residues 29-51 (MHCDESSGSPHSEHNDYSYEKTN) and 59-73 (SREHRDNQLSRLKSE). The chain crosses the membrane as a helical span at residues 109–131 (IVFLIAFSSMMGPMGTSIIFPAI). At 132-139 (NSITTEFK) the chain is on the cytoplasmic side. Residues 140–163 (TSVIMVNVSIGVYLLSLGVFPLWW) traverse the membrane as a helical segment. Over 164–175 (SSLSELEGRRTT) the chain is Extracellular. The chain crosses the membrane as a helical span at residues 176–193 (YITSFALLFAFNIGSALA). Topologically, residues 194–235 (PDINSFIALRMLCGAASASVQSVGAGTVADLYISEDRGKNLS) are cytoplasmic. Residues 236–256 (YYYLGPLLAPLLSPIFGSLLV) form a helical membrane-spanning segment. Topologically, residues 257–265 (NRWPWRSTQ) are extracellular. Residues 266–283 (WFMVILSGCNVILLTVLL) form a helical membrane-spanning segment. Residues 284-475 (PETLRKQDSK…KSLHFLEYPP (192 aa)) lie on the Cytoplasmic side of the membrane. Ser436 is subject to Phosphoserine. A helical transmembrane segment spans residues 476-493 (VALAITFSAISFSTVYFV). Topologically, residues 494-510 (NMTVEYKYSRPPYNFKP) are extracellular. A helical membrane pass occupies residues 511–532 (LYIGLLYIPNSVTYFFASIYGG). Topologically, residues 533–558 (RWVDMLLKRYKEKYGILAPEARISWN) are cytoplasmic. Residues 559–577 (VVTSVISFPIALLIFGWCL) form a helical membrane-spanning segment. Over 578–586 (DKKCHWVTP) the chain is Extracellular. Residues 587-609 (LIGTALFGYAAMMTIGATLSYLV) traverse the membrane as a helical segment. The Cytoplasmic segment spans residues 610–624 (DSLPGKGATGVALNN). A helical membrane pass occupies residues 625–642 (LIRQILAATAVFVTTPML). Residues 643–648 (NGMGTG) lie on the Extracellular side of the membrane. A helical membrane pass occupies residues 649–668 (WAFTMLAFIVLGASSVLIIL). The Cytoplasmic segment spans residues 669 to 689 (KKHGDYWRENYDLQKLYDKID).

This sequence belongs to the major facilitator superfamily. CAR1 family.

The protein resides in the cell membrane. Its function is as follows. Multidrug resistance transporter involved in resistance and adaptation to quinidine and to the herbicide barban (4-chloro-2-butynyl [3-chlorophenyl] carbamate). The sequence is that of Quinidine resistance protein 3 (QDR3) from Saccharomyces cerevisiae (strain ATCC 204508 / S288c) (Baker's yeast).